The following is a 43-amino-acid chain: Lanthionine-containing peptide SapB (43 aa).

An N-terminal signal peptide occupies residues Met1 to Ala21. Cross-links (lanthionine (Ser-Cys)) lie at residues Ser24–Cys31 and Ser34–Cys41. 2,3-didehydroalanine (Ser) occurs at positions 27 and 37.

Belongs to the lanthionine-containing morphogen protein family. Post-translationally, maturation involves the enzymatic conversion of Ser into dehydrated AA and the formation of thioether bonds with cysteine. This is followed by membrane translocation and cleavage of the modified precursor.

In terms of biological role, lanthionine-containing peptide devoid of antibiotic properties, involved in the formation of aerial mycelium. Suggested to self-assemble at air-water interfaces, thus providing a film of surfactant through which nascent aerial hyphae can emerge. The aerial hyphae differentiate further into spores. The chain is Lanthionine-containing peptide SapB (ramS) from Streptomyces griseus subsp. griseus (strain JCM 4626 / CBS 651.72 / NBRC 13350 / KCC S-0626 / ISP 5235).